We begin with the raw amino-acid sequence, 639 residues long: Phosphomethylpyrimidine synthase (639 aa).

The segment at 49-71 (DTPTDFGGEQNRPVRVYDTSGPY) is disordered. Substrate-binding positions include N231, M260, Y289, H325, 345–347 (SRG), 386–389 (DGLR), and E425. H429 provides a ligand contact to Zn(2+). Substrate is bound at residue Y452. H493 serves as a coordination point for Zn(2+). Residues C573, C576, and C581 each contribute to the [4Fe-4S] cluster site.

The protein belongs to the ThiC family. As to quaternary structure, homodimer. [4Fe-4S] cluster is required as a cofactor.

The catalysed reaction is 5-amino-1-(5-phospho-beta-D-ribosyl)imidazole + S-adenosyl-L-methionine = 4-amino-2-methyl-5-(phosphooxymethyl)pyrimidine + CO + 5'-deoxyadenosine + formate + L-methionine + 3 H(+). Its pathway is cofactor biosynthesis; thiamine diphosphate biosynthesis. Catalyzes the synthesis of the hydroxymethylpyrimidine phosphate (HMP-P) moiety of thiamine from aminoimidazole ribotide (AIR) in a radical S-adenosyl-L-methionine (SAM)-dependent reaction. The sequence is that of Phosphomethylpyrimidine synthase from Teredinibacter turnerae (strain ATCC 39867 / T7901).